We begin with the raw amino-acid sequence, 250 residues long: UPF0309 protein BH0227 (250 aa).

Residues Val31–Pro214 form the SIS domain.

Belongs to the UPF0309 family.

The sequence is that of UPF0309 protein BH0227 from Halalkalibacterium halodurans (strain ATCC BAA-125 / DSM 18197 / FERM 7344 / JCM 9153 / C-125) (Bacillus halodurans).